The sequence spans 168 residues: Transcription antitermination protein NusB (168 aa).

The protein belongs to the NusB family.

Functionally, involved in transcription antitermination. Required for transcription of ribosomal RNA (rRNA) genes. Binds specifically to the boxA antiterminator sequence of the ribosomal RNA (rrn) operons. This Prosthecochloris aestuarii (strain DSM 271 / SK 413) protein is Transcription antitermination protein NusB.